A 146-amino-acid chain; its full sequence is Holo-[acyl-carrier-protein] synthase (146 aa).

Positions 9 and 63 each coordinate Mg(2+).

It belongs to the P-Pant transferase superfamily. AcpS family. Mg(2+) serves as cofactor.

It localises to the cytoplasm. It catalyses the reaction apo-[ACP] + CoA = holo-[ACP] + adenosine 3',5'-bisphosphate + H(+). Functionally, transfers the 4'-phosphopantetheine moiety from coenzyme A to a Ser of acyl-carrier-protein. The sequence is that of Holo-[acyl-carrier-protein] synthase from Burkholderia orbicola (strain MC0-3).